We begin with the raw amino-acid sequence, 414 residues long: MALVLHTYKGNKSAEKALIAAEYVGVQIDVPSDFQMGVTNKTPAFLKMNPIGKVPVLETPEGSVFESNAIARYVSRLNGDNSLNGSSLIEYAQIEQWIDFSSLEIYASILRWFGPRMGFMPYSAPAEEGAISTLKRALDALNTHLTSNTYLVGHSITLADIITVCNLNLGFATVMTKKFTSEFPHVERYFWTVVNQPNFTKVLGDVKQTEAVPPIASKKAAQPAKPKEEPKKKEAPVAEAPKLAEEEEAPKPKAKNPLDLLPPSPMVLDDWKRLYSNTKSNFREVAIKGFWDMYDPEGYSLWFCDYKYNDENMVSFVTLNKVGGFLQRMDLARKYSFGKMLICGSEGPFKVKGLWLFRGPEIPKFIMDEVYDMELYEWTKVDISDEAQKERVSQMIEDAEPFEGEALLDAKCFK.

Residues 1–82 form the GST N-terminal domain; it reads MALVLHTYKG…YVSRLNGDNS (82 aa). Positions 87–215 constitute a GST C-terminal domain; the sequence is SLIEYAQIEQ…VKQTEAVPPI (129 aa). Over residues 214 to 224 the composition is skewed to low complexity; that stretch reads PIASKKAAQPA. The disordered stretch occupies residues 214 to 260; it reads PIASKKAAQPAKPKEEPKKKEAPVAEAPKLAEEEEAPKPKAKNPLDL. Residues 225-236 show a composition bias toward basic and acidic residues; sequence KPKEEPKKKEAP. An EF-1-gamma C-terminal domain is found at 254–414; that stretch reads AKNPLDLLPP…EALLDAKCFK (161 aa).

As to quaternary structure, EF-1 is composed of four subunits: alpha, beta, delta, and gamma.

Functionally, probably plays a role in anchoring the complex to other cellular components. The chain is Probable elongation factor 1-gamma 1 from Arabidopsis thaliana (Mouse-ear cress).